Reading from the N-terminus, the 112-residue chain is uncharacterized protein (112 aa).

Residues 89–106 (TLYVLVIVGLTILCFLLV) form a helical membrane-spanning segment.

The protein belongs to the IIV-6 466R family.

The protein localises to the membrane. This is an uncharacterized protein from Aedes vexans (Inland floodwater mosquito).